Here is a 288-residue protein sequence, read N- to C-terminus: tRNA pseudouridine synthase A (288 aa).

Asp58 functions as the Nucleophile in the catalytic mechanism. Tyr124 is a binding site for substrate.

Belongs to the tRNA pseudouridine synthase TruA family. As to quaternary structure, homodimer.

The catalysed reaction is uridine(38/39/40) in tRNA = pseudouridine(38/39/40) in tRNA. In terms of biological role, formation of pseudouridine at positions 38, 39 and 40 in the anticodon stem and loop of transfer RNAs. This Corynebacterium diphtheriae (strain ATCC 700971 / NCTC 13129 / Biotype gravis) protein is tRNA pseudouridine synthase A.